A 163-amino-acid polypeptide reads, in one-letter code: MNHYLTPDLCDAYPELVQVLEPMFSNFGGRDSFGGEIVTIKCFEDNSLVKEQAELKGNGKVLVVDGGGSLRCALLGDMIAEKAAKNGWEGLVIYGCIRDVDVIAQTDLGVQALASHPKKTEKRGLGDLNVPVTFAGVTFHPGQYIYADNNGVIISPSPLKMPE.

Substrate contacts are provided by residues 76-79 (GDMI) and Arg-98. Asp-99 lines the a divalent metal cation pocket.

Belongs to the class II aldolase/RraA-like family. Homotrimer. The cofactor is a divalent metal cation.

It carries out the reaction 4-hydroxy-4-methyl-2-oxoglutarate = 2 pyruvate. It catalyses the reaction oxaloacetate + H(+) = pyruvate + CO2. Functionally, catalyzes the aldol cleavage of 4-hydroxy-4-methyl-2-oxoglutarate (HMG) into 2 molecules of pyruvate. Also contains a secondary oxaloacetate (OAA) decarboxylase activity due to the common pyruvate enolate transition state formed following C-C bond cleavage in the retro-aldol and decarboxylation reactions. The protein is Putative 4-hydroxy-4-methyl-2-oxoglutarate aldolase of Pseudomonas fluorescens (strain Pf0-1).